The following is a 203-amino-acid chain: MQNAPESVLNALVPMVVEQTAKGERSYDIYSRLLKERVIFLVGQVEEHMANLIVAQLLFLESESPDKDIYLYINSPGGSVTAGMAIYDTMQFIKPNVSTVCIGQAASMGAFLLAGGAKGKRHCLPNSRVMIHQPLGGFQGQASDIAIHAQEILGIKNKLNQMLADHTGQPLEVIERDTDRDNFMSATEAAEYGLVDSVLDKRG.

The Nucleophile role is filled by S107. The active site involves H132.

The protein belongs to the peptidase S14 family. Fourteen ClpP subunits assemble into 2 heptameric rings which stack back to back to give a disk-like structure with a central cavity, resembling the structure of eukaryotic proteasomes.

It is found in the cytoplasm. The enzyme catalyses Hydrolysis of proteins to small peptides in the presence of ATP and magnesium. alpha-casein is the usual test substrate. In the absence of ATP, only oligopeptides shorter than five residues are hydrolyzed (such as succinyl-Leu-Tyr-|-NHMec, and Leu-Tyr-Leu-|-Tyr-Trp, in which cleavage of the -Tyr-|-Leu- and -Tyr-|-Trp bonds also occurs).. In terms of biological role, cleaves peptides in various proteins in a process that requires ATP hydrolysis. Has a chymotrypsin-like activity. Plays a major role in the degradation of misfolded proteins. The sequence is that of ATP-dependent Clp protease proteolytic subunit from Shewanella loihica (strain ATCC BAA-1088 / PV-4).